Consider the following 424-residue polypeptide: GTPase Obg (424 aa).

In terms of domain architecture, Obg spans 1 to 158; that stretch reads MFIDTAKIFV…RWIKLELKLL (158 aa). The region spanning 159-331 is the OBG-type G domain; it reads ADVGLIGFPN…LMKEAARLLS (173 aa). GTP contacts are provided by residues 165–172, 190–194, 212–215, 282–285, and 312–314; these read GFPNVGKS, FTTLK, DIPG, NKSD, and SAA. S172 and T192 together coordinate Mg(2+). Residues 345 to 424 form the OCT domain; it reads RFIEEEKRFT…LNDFEFDFLL (80 aa).

The protein belongs to the TRAFAC class OBG-HflX-like GTPase superfamily. OBG GTPase family. As to quaternary structure, monomer. Requires Mg(2+) as cofactor.

It localises to the cytoplasm. An essential GTPase which binds GTP, GDP and possibly (p)ppGpp with moderate affinity, with high nucleotide exchange rates and a fairly low GTP hydrolysis rate. Plays a role in control of the cell cycle, stress response, ribosome biogenesis and in those bacteria that undergo differentiation, in morphogenesis control. In Clostridium botulinum (strain Okra / Type B1), this protein is GTPase Obg.